A 111-amino-acid polypeptide reads, in one-letter code: uncharacterized protein (111 aa).

It belongs to the asfivirus E111R family.

This is an uncharacterized protein from African swine fever virus (strain Badajoz 1971 Vero-adapted) (Ba71V).